A 4490-amino-acid chain; its full sequence is Dynein axonemal heavy chain 8 (4490 aa).

Phosphoserine is present on Ser674. AAA regions lie at residues Tyr1808 to Thr2030, Asn2090 to Leu2309, Tyr2416 to Gly2669, and Gln2780 to Arg3034. Residues Gly1846–Thr1853 and Gly2128–Thr2135 contribute to the ATP site. The interval Tyr3049 to Cys3346 is stalk. Coiled coils occupy residues Asp3072–Thr3164, Leu3290–Ser3354, and Arg3594–Leu3630. 2 AAA regions span residues Leu3432–Glu3662 and Ala3877–Asn4091.

The protein belongs to the dynein heavy chain family. In terms of assembly, consists of at least two heavy chains and a number of intermediate and light chains. As to expression, expressed in spermatozoa (at protein level). Not detected in airway epithelial cells (at protein level).

It is found in the cytoplasm. The protein resides in the cytoskeleton. Its subcellular location is the flagellum axoneme. Force generating protein component of the outer dynein arms (ODAs) in the sperm flagellum. Produces force towards the minus ends of microtubules. Dynein has ATPase activity; the force-producing power stroke is thought to occur on release of ADP. Involved in sperm motility; implicated in sperm flagellar assembly. The chain is Dynein axonemal heavy chain 8 from Homo sapiens (Human).